A 517-amino-acid chain; its full sequence is GMP synthase [glutamine-hydrolyzing] (517 aa).

Residues 9-199 (RILILDFGSQ…VLGVCGCERL (191 aa)) enclose the Glutamine amidotransferase type-1 domain. Catalysis depends on cysteine 86, which acts as the Nucleophile. Catalysis depends on residues histidine 173 and glutamate 175. The GMPS ATP-PPase domain occupies 200–392 (WTSESIIEDA…LGLPYNMLYR (193 aa)). ATP is bound at residue 227 to 233 (SGGVDSS).

As to quaternary structure, homodimer.

The catalysed reaction is XMP + L-glutamine + ATP + H2O = GMP + L-glutamate + AMP + diphosphate + 2 H(+). Its pathway is purine metabolism; GMP biosynthesis; GMP from XMP (L-Gln route): step 1/1. Functionally, catalyzes the synthesis of GMP from XMP. This Vibrio cholerae serotype O1 (strain ATCC 39541 / Classical Ogawa 395 / O395) protein is GMP synthase [glutamine-hydrolyzing].